The sequence spans 864 residues: Disintegrin and metalloproteinase domain-containing protein 15 (864 aa).

The signal sequence occupies residues 1–17; it reads MRLALLWALGLLGAGSP. The interval 17 to 49 is disordered; the sequence is PRPSPPLPNIGGTEEEQQASPERTQSRSLENQV. Positions 18-208 are excised as a propeptide; the sequence is RPSPPLPNIG…EQHHLRRLKR (191 aa). The span at 34 to 49 shows a compositional bias: polar residues; it reads QASPERTQSRSLENQV. Asn57 carries N-linked (GlcNAc...) asparagine glycosylation. Residues 178-185 carry the Cysteine switch motif; the sequence is HTCAPSWH. Cys180 provides a ligand contact to Zn(2+). Over 209-698 the chain is Extracellular; the sequence is DVVTETKIVE…QLRATSSLTT (490 aa). One can recognise a Peptidase M12B domain in the interval 215–416; the sequence is KIVELVIVAD…GMGSCLFEWP (202 aa). N-linked (GlcNAc...) asparagine glycosylation is present at Asn239. Disulfide bonds link Cys325-Cys411, Cys367-Cys395, Cys369-Cys378, and Cys482-Cys502. Position 350 (His350) interacts with Zn(2+). Glu351 is a catalytic residue. His354 and His360 together coordinate Zn(2+). N-linked (GlcNAc...) asparagine glycosylation is found at Asn391 and Asn394. The 88-residue stretch at 423–510 folds into the Disintegrin domain; sequence SSLCGNMFVD…QCPPDIRLGD (88 aa). Asn608 and Asn613 each carry an N-linked (GlcNAc...) asparagine glycan. 3 cysteine pairs are disulfide-bonded: Cys659-Cys669, Cys663-Cys675, and Cys677-Cys686. The EGF-like domain occupies 659–687; that stretch reads CRSKCHGHGVCDSSRHCHCDEGWAPPDCM. Residues 699-719 traverse the membrane as a helical segment; it reads GLLLSLLLLLVLVLLGASYWY. Residues Tyr717 and Tyr737 each carry the phosphotyrosine; by HCK and LCK modification. Over 720–864 the chain is Cytoplasmic; the sequence is RARLHQRLCQ…PPPAASSLYL (145 aa). The segment at 738–864 is disordered; it reads RAAQSGPPER…PPPAASSLYL (127 aa). Over residues 753–765 the composition is skewed to polar residues; it reads RAQQMPGTKQANV. Composition is skewed to pro residues over residues 768–780 and 810–825; these read PVPP…PNPV and PQGP…PLPA. The short motif at 816-822 is the SH3-binding element; it reads PPPPRKP. Residues 826–850 are compositionally biased toward low complexity; the sequence is NPQGRPPLGDLPGPGDGSLQLVVPS. The SH3-binding motif lies at 851-857; the sequence is RPAPPPP.

Interacts with ITAGV-ITGB3 (vitronectin receptor). Interacts with SH3GL2 and SNX9; this interaction occurs preferentially with ADAM15 precursor, rather than the processed form, suggesting it occurs in a secretory pathway compartment prior to the medial Golgi. Interacts with ITAG9-ITGB1. Interacts specifically with Src family protein-tyrosine kinases (PTKs). Interacts with SH3PXD2A. Interacts with ITAGV-ITGB1. Interacts with GRB2, HCK, ITSN1, ITSN2, LYN, MAPK1, MAPK3, NCF1, NCK1, nephrocystin, PTK6, SNX33, LCK and SRC. Requires Zn(2+) as cofactor. Post-translationally, the precursor is cleaved by a furin endopeptidase. In terms of processing, phosphorylation increases association with PTKs. Predominantly expressed in brain, spinal cord, sciatic nerve and lung. Expressed at lower levels in all other tissues. In the peripheral nervous system, expressed predominantly by Schwann cells. In the central nervous system, preferentially expressed by neuronal cells.

Its subcellular location is the endomembrane system. The protein resides in the cell junction. It is found in the adherens junction. The protein localises to the cell projection. It localises to the cilium. Its subcellular location is the flagellum. The protein resides in the cytoplasmic vesicle. It is found in the secretory vesicle. The protein localises to the acrosome. In terms of biological role, active metalloproteinase with gelatinolytic and collagenolytic activity. Plays a role in the wound healing process. Mediates both heterotypic intraepithelial cell/T-cell interactions and homotypic T-cell aggregation. Inhibits beta-1 integrin-mediated cell adhesion and migration of airway smooth muscle cells. Suppresses cell motility on or towards fibronectin possibly by driving alpha-v/beta-1 integrin (ITAGV-ITGB1) cell surface expression via ERK1/2 inactivation. Cleaves E-cadherin in response to growth factor deprivation. Plays a role in glomerular cell migration. Plays a role in pathological neovascularization. May play a role in cartilage remodeling. May be proteolytically processed, during sperm epididymal maturation and the acrosome reaction. May play a role in sperm-egg binding through its disintegrin domain. The polypeptide is Disintegrin and metalloproteinase domain-containing protein 15 (Adam15) (Rattus norvegicus (Rat)).